Reading from the N-terminus, the 224-residue chain is UPF0758 protein Pfl01_5539 (224 aa).

The 123-residue stretch at 102-224 (ALENPQVVRD…PLSMAECGWM (123 aa)) folds into the MPN domain. Residues histidine 173, histidine 175, and aspartate 186 each contribute to the Zn(2+) site. A JAMM motif motif is present at residues 173–186 (HNHPSGNSDPSQAD).

Belongs to the UPF0758 family.

The protein is UPF0758 protein Pfl01_5539 of Pseudomonas fluorescens (strain Pf0-1).